The following is a 121-amino-acid chain: MRKSYRIKSEQDFQTVFENGESVANRAFVIYVLPRKQNKHFRVGISVGKKVGHTAVVRNRLKRYIRAVLTENRDRIAPDLDFLVIARPYAHDFDWEKTRENLLHALNLAHVIEEMPNKEEK.

The protein belongs to the RnpA family. Consists of a catalytic RNA component (M1 or rnpB) and a protein subunit.

The enzyme catalyses Endonucleolytic cleavage of RNA, removing 5'-extranucleotides from tRNA precursor.. In terms of biological role, RNaseP catalyzes the removal of the 5'-leader sequence from pre-tRNA to produce the mature 5'-terminus. It can also cleave other RNA substrates such as 4.5S RNA. The protein component plays an auxiliary but essential role in vivo by binding to the 5'-leader sequence and broadening the substrate specificity of the ribozyme. This is Ribonuclease P protein component from Lactobacillus delbrueckii subsp. bulgaricus (strain ATCC 11842 / DSM 20081 / BCRC 10696 / JCM 1002 / NBRC 13953 / NCIMB 11778 / NCTC 12712 / WDCM 00102 / Lb 14).